We begin with the raw amino-acid sequence, 954 residues long: Glycine dehydrogenase (decarboxylating) (954 aa).

Lys-704 bears the N6-(pyridoxal phosphate)lysine mark.

This sequence belongs to the GcvP family. As to quaternary structure, the glycine cleavage system is composed of four proteins: P, T, L and H. Requires pyridoxal 5'-phosphate as cofactor.

The enzyme catalyses N(6)-[(R)-lipoyl]-L-lysyl-[glycine-cleavage complex H protein] + glycine + H(+) = N(6)-[(R)-S(8)-aminomethyldihydrolipoyl]-L-lysyl-[glycine-cleavage complex H protein] + CO2. The glycine cleavage system catalyzes the degradation of glycine. The P protein binds the alpha-amino group of glycine through its pyridoxal phosphate cofactor; CO(2) is released and the remaining methylamine moiety is then transferred to the lipoamide cofactor of the H protein. In Rhizobium meliloti (strain 1021) (Ensifer meliloti), this protein is Glycine dehydrogenase (decarboxylating).